A 476-amino-acid polypeptide reads, in one-letter code: tRNA(Ile)-lysidine synthase (476 aa).

An ATP-binding site is contributed by serine 30 to serine 35.

Belongs to the tRNA(Ile)-lysidine synthase family.

The protein resides in the cytoplasm. The enzyme catalyses cytidine(34) in tRNA(Ile2) + L-lysine + ATP = lysidine(34) in tRNA(Ile2) + AMP + diphosphate + H(+). Ligates lysine onto the cytidine present at position 34 of the AUA codon-specific tRNA(Ile) that contains the anticodon CAU, in an ATP-dependent manner. Cytidine is converted to lysidine, thus changing the amino acid specificity of the tRNA from methionine to isoleucine. This is tRNA(Ile)-lysidine synthase from Bacillus cereus (strain ATCC 14579 / DSM 31 / CCUG 7414 / JCM 2152 / NBRC 15305 / NCIMB 9373 / NCTC 2599 / NRRL B-3711).